The sequence spans 420 residues: Glutamate dehydrogenase (420 aa).

Residue Lys105 is part of the active site. Gly220 to Tyr226 is an NAD(+) binding site.

Belongs to the Glu/Leu/Phe/Val dehydrogenases family. As to quaternary structure, homohexamer.

Its subcellular location is the cytoplasm. It catalyses the reaction L-glutamate + NAD(+) + H2O = 2-oxoglutarate + NH4(+) + NADH + H(+). The catalysed reaction is L-glutamate + NADP(+) + H2O = 2-oxoglutarate + NH4(+) + NADPH + H(+). The sequence is that of Glutamate dehydrogenase (gdhA) from Pyrococcus furiosus (strain ATCC 43587 / DSM 3638 / JCM 8422 / Vc1).